The chain runs to 84 residues: Beta-mammal/insect toxin Ts1 (84 aa).

The signal sequence occupies residues 1 to 20; it reads MKGMILFISCLLLIGIVVEC. The LCN-type CS-alpha/beta domain occupies 21-82; the sequence is KEGYLMDHEG…VWDRATNKCG (62 aa). Cystine bridges form between C31–C81, C35–C57, C43–C62, and C47–C64. The residue at position 81 (C81) is a Cysteine amide.

It belongs to the long (4 C-C) scorpion toxin superfamily. Sodium channel inhibitor family. In terms of processing, C-terminal amidation is important for high activity. Expressed by the venom gland.

Its subcellular location is the secreted. Voltage-gated sodium channels (Nav) gating-modifier. Acts both as alpha- and beta-toxin, since it affects not only activation but also inactivation of Nav channels. Binds to Nav domain DII and impairs the four Nav channel voltage sensors movements. Depending on Nav channel subtypes tested, can also bind Nav domains DIII (low affinity) and DIV (very low affinity). Acts on almost all the Nav channels tested (mammalian Nav1.2/SCN2A, Nav1.3/SCN3A, Nav1.4/SCN4A, Nav1.5/SCN5A, Nav1.6/SCN8A, Nav1.9/SCN11A, and insect DmNav1). Is highly active against both mammals and insects. Irreversibly modulates DmNav channels. Other Ts1 activities have been studied, such as immunomodulation, antimicrobial activity or exocrine secretion. This toxin exhibits an antifungal activity against filamentous fungi. In vitro, it has an important immunomodulatory effect on macrophages by stimulating the release of pro-inflammatory cytokines. It also shows an activity in exocrine secretion in pancreas, stomach and adrenal gland. This is Beta-mammal/insect toxin Ts1 from Tityus serrulatus (Brazilian scorpion).